The sequence spans 544 residues: Chaperonin GroEL (544 aa).

Residues 30–33 (TLGP), Lys-51, 87–91 (DGTTT), Gly-415, and Asp-495 contribute to the ATP site.

This sequence belongs to the chaperonin (HSP60) family. In terms of assembly, forms a cylinder of 14 subunits composed of two heptameric rings stacked back-to-back. Interacts with the co-chaperonin GroES.

It localises to the cell outer membrane. It carries out the reaction ATP + H2O + a folded polypeptide = ADP + phosphate + an unfolded polypeptide.. In terms of biological role, together with its co-chaperonin GroES, plays an essential role in assisting protein folding. The GroEL-GroES system forms a nano-cage that allows encapsulation of the non-native substrate proteins and provides a physical environment optimized to promote and accelerate protein folding. This Neisseria gonorrhoeae protein is Chaperonin GroEL.